The sequence spans 34 residues: Photosystem II reaction center protein M (34 aa).

The chain crosses the membrane as a helical span at residues 5-25 (ILGLIATALFIIIPTSFLLIL).

The protein belongs to the PsbM family. In terms of assembly, PSII is composed of 1 copy each of membrane proteins PsbA, PsbB, PsbC, PsbD, PsbE, PsbF, PsbH, PsbI, PsbJ, PsbK, PsbL, PsbM, PsbT, PsbX, PsbY, PsbZ, Psb30/Ycf12, at least 3 peripheral proteins of the oxygen-evolving complex and a large number of cofactors. It forms dimeric complexes.

It localises to the plastid. The protein localises to the chloroplast thylakoid membrane. In terms of biological role, one of the components of the core complex of photosystem II (PSII). PSII is a light-driven water:plastoquinone oxidoreductase that uses light energy to abstract electrons from H(2)O, generating O(2) and a proton gradient subsequently used for ATP formation. It consists of a core antenna complex that captures photons, and an electron transfer chain that converts photonic excitation into a charge separation. This subunit is found at the monomer-monomer interface. In Nephroselmis olivacea (Green alga), this protein is Photosystem II reaction center protein M.